We begin with the raw amino-acid sequence, 88 residues long: Acyl-CoA-binding domain-containing protein 7 (88 aa).

One can recognise an ACB domain in the interval 3–88 (LQADFDQAAQ…ARELIEKYGI (86 aa)). An acyl-CoA contacts are provided by residues Arg15, 30–34 (YGLYK), Lys56, and Tyr75.

Belongs to the ACBD7 family.

Functionally, binds medium- and long-chain acyl-CoA esters. This chain is Acyl-CoA-binding domain-containing protein 7 (Acbd7), found in Mus musculus (Mouse).